The chain runs to 464 residues: Asparagine--tRNA ligase (464 aa).

Belongs to the class-II aminoacyl-tRNA synthetase family. In terms of assembly, homodimer.

The protein localises to the cytoplasm. The catalysed reaction is tRNA(Asn) + L-asparagine + ATP = L-asparaginyl-tRNA(Asn) + AMP + diphosphate + H(+). The chain is Asparagine--tRNA ligase from Cytophaga hutchinsonii (strain ATCC 33406 / DSM 1761 / CIP 103989 / NBRC 15051 / NCIMB 9469 / D465).